We begin with the raw amino-acid sequence, 147 residues long: Large ribosomal subunit protein uL16 (147 aa).

This sequence belongs to the universal ribosomal protein uL16 family. Part of the 50S ribosomal subunit.

In terms of biological role, binds 23S rRNA and is also seen to make contacts with the A and possibly P site tRNAs. This chain is Large ribosomal subunit protein uL16, found in Clostridium tetani (strain Massachusetts / E88).